Here is a 517-residue protein sequence, read N- to C-terminus: 2,3-bisphosphoglycerate-independent phosphoglycerate mutase (517 aa).

The Mn(2+) site is built by aspartate 14 and serine 64. The Phosphoserine intermediate role is filled by serine 64. Substrate-binding positions include histidine 125, 155–156 (RD), arginine 187, arginine 193, 263–266 (RSDR), and lysine 337. Residues aspartate 404, histidine 408, aspartate 445, histidine 446, and histidine 464 each coordinate Mn(2+).

Belongs to the BPG-independent phosphoglycerate mutase family. As to quaternary structure, monomer. Mn(2+) is required as a cofactor.

The enzyme catalyses (2R)-2-phosphoglycerate = (2R)-3-phosphoglycerate. It participates in carbohydrate degradation; glycolysis; pyruvate from D-glyceraldehyde 3-phosphate: step 3/5. Its function is as follows. Catalyzes the interconversion of 2-phosphoglycerate and 3-phosphoglycerate. In Nitrosococcus oceani (strain ATCC 19707 / BCRC 17464 / JCM 30415 / NCIMB 11848 / C-107), this protein is 2,3-bisphosphoglycerate-independent phosphoglycerate mutase.